We begin with the raw amino-acid sequence, 99 residues long: Turripeptide OL71 (99 aa).

In terms of processing, contains 5 disulfide bonds. In terms of tissue distribution, expressed by the venom duct.

Its subcellular location is the secreted. In terms of biological role, acts as a neurotoxin by inhibiting an ion channel. The chain is Turripeptide OL71 from Iotyrris olangoensis (Sea snail).